Reading from the N-terminus, the 251-residue chain is NLP effector protein Pc129485 (251 aa).

The first 19 residues, 1–19 (MNFRIVLLVLVASLAGAQA), serve as a signal peptide directing secretion. Residues 127–133 (GHRHNWE) carry the Hepta-peptide GHRHDWE motif motif. 2 N-linked (GlcNAc...) asparagine glycosylation sites follow: Asn146 and Asn218.

Belongs to the Necrosis inducing protein (NPP1) family.

It is found in the secreted. Functionally, secreted effector that contributes strongly to virulence during infection by P.capsici. This Phytophthora capsici protein is NLP effector protein Pc129485.